The chain runs to 628 residues: Cystathionine gamma-synthase-like enzyme iboG2 (628 aa).

Tyr313 contacts substrate. Residue Lys417 is modified to N6-(pyridoxal phosphate)lysine.

Belongs to the trans-sulfuration enzymes family. Pyridoxal 5'-phosphate is required as a cofactor.

The protein operates within secondary metabolite biosynthesis. Its function is as follows. Cystathionine gamma-synthase-like enzyme; part of the gene cluster that mediates the biosynthesis of the psychoactive metabolites ibotenic acid and muscimol. The first committed step is glutamate hydroxylation by the 2-oxoglutarate-dependent dioxygenase iboH, and the last step is decarboxylation of ibotenic acid to muscimol by the decarboxylase iboD. The order of the intermediate reactions is somewhat ambiguous. IboA likely activates the carboxylic acid at position 5 to introduce an amide bond, and the flavin monooxygenase iboF generates the N-O bond. There are several options for the latter step. One option is that iboF directly hydroxylates the amide nitrogen formed by iboA to produce a hydroxamic acid species. Another option is that iboF hydroxylates an external N-containing compound, whose resulting N-O bond is subsequently introduced into the hydroxyglutamate scaffold. The paralogous PLP-dependent cystathionine gamma-synthase-like enzymes iboG1 and iboG2 are likely involved in substitution of the OH group at position 3 by the O-N moiety. The first cyclic intermediate is most probably tricholomic acid which is likely desaturated to ibotenic acid by the cytochrome P450 monooxygenase iboC. The polypeptide is Cystathionine gamma-synthase-like enzyme iboG2 (Amanita muscaria (strain Koide BX008)).